Consider the following 1104-residue polypeptide: Inhibitory regulator protein BUD2/CLA2 (1104 aa).

N-acetylserine is present on Ser-2. Positions 316–444 constitute a C2 domain; the sequence is RSEYLSITGS…RYNKETRLPI (129 aa). In terms of domain architecture, Ras-GAP spans 536–753; it reads AKIDGTVSRI…NDLLDYIDKM (218 aa). Ser-854 is subject to Phosphoserine. The segment at 1027-1104 is disordered; the sequence is NPKSSNKTSV…FKKKKETGGS (78 aa). Composition is skewed to polar residues over residues 1029 to 1043 and 1052 to 1069; these read KSSN…SSEN and LPNS…SPTK. Basic residues predominate over residues 1090 to 1104; sequence KLTRWFKKKKETGGS.

Functionally, stimulates the GTPase activity of BUD1/RSR1. Participates in the regulation of bud-site selection. The protein is Inhibitory regulator protein BUD2/CLA2 (BUD2) of Saccharomyces cerevisiae (strain ATCC 204508 / S288c) (Baker's yeast).